The primary structure comprises 236 residues: Orotidine 5'-phosphate decarboxylase (236 aa).

Substrate contacts are provided by residues aspartate 12, lysine 34, 60–69 (DLKLHDIPHT), threonine 123, arginine 184, glutamine 193, glycine 213, and arginine 214. The active-site Proton donor is lysine 62.

The protein belongs to the OMP decarboxylase family. Type 1 subfamily. In terms of assembly, homodimer.

The enzyme catalyses orotidine 5'-phosphate + H(+) = UMP + CO2. It participates in pyrimidine metabolism; UMP biosynthesis via de novo pathway; UMP from orotate: step 2/2. Functionally, catalyzes the decarboxylation of orotidine 5'-monophosphate (OMP) to uridine 5'-monophosphate (UMP). The sequence is that of Orotidine 5'-phosphate decarboxylase from Gluconobacter oxydans (strain 621H) (Gluconobacter suboxydans).